The primary structure comprises 120 residues: Ribosome-binding factor A (120 aa).

Belongs to the RbfA family. In terms of assembly, monomer. Binds 30S ribosomal subunits, but not 50S ribosomal subunits or 70S ribosomes.

The protein resides in the cytoplasm. Its function is as follows. One of several proteins that assist in the late maturation steps of the functional core of the 30S ribosomal subunit. Associates with free 30S ribosomal subunits (but not with 30S subunits that are part of 70S ribosomes or polysomes). Required for efficient processing of 16S rRNA. May interact with the 5'-terminal helix region of 16S rRNA. The polypeptide is Ribosome-binding factor A (Dictyoglomus thermophilum (strain ATCC 35947 / DSM 3960 / H-6-12)).